Here is a 131-residue protein sequence, read N- to C-terminus: Small ribosomal subunit protein uS8 (131 aa).

Belongs to the universal ribosomal protein uS8 family. As to quaternary structure, part of the 30S ribosomal subunit. Contacts proteins S5 and S12.

Its function is as follows. One of the primary rRNA binding proteins, it binds directly to 16S rRNA central domain where it helps coordinate assembly of the platform of the 30S subunit. The polypeptide is Small ribosomal subunit protein uS8 (Hyphomonas neptunium (strain ATCC 15444)).